The following is a 534-amino-acid chain: Low affinity inorganic phosphate transporter 1 (534 aa).

The Cytoplasmic segment spans residues 1 to 23 (MAKDLQVLTALDVAKTQLYHFTA). Residues 24–44 (IVIAGMGFFTDAYDLFCISLV) traverse the membrane as a helical segment. The Extracellular segment spans residues 45–69 (TKLLGRIYYHHEGALKPGSLPPNVA). Residues 70–90 (AAVNGVAFCGTLAGQLFFGWL) form a helical membrane-spanning segment. At 91-98 (GDKLGRKK) the chain is on the cytoplasmic side. A helical transmembrane segment spans residues 99–119 (VYGMTLMLMVICSIASGLSFG). Residues 120 to 124 (HTPKS) lie on the Extracellular side of the membrane. A helical membrane pass occupies residues 125-145 (VMATLCFFRFWLGFGIGGDYP). The Cytoplasmic portion of the chain corresponds to 146 to 163 (LSATIMSEYANKKTRGAF). A helical membrane pass occupies residues 164 to 184 (IAAVFAMQGFGILAGGMVAII). Residues 185–210 (VSAAFKNQFPAPAYKDGALASTISQA) lie on the Extracellular side of the membrane. A helical membrane pass occupies residues 211-231 (DFVWRIIVMFGAIPTALTYYW). Residues 232–290 (RMKMPETARYTALVAKNLKQATNDMSKVLQVEIEPEQEKVEEISQGNDFGLFTKQFLRR) are Cytoplasmic-facing. The helical transmembrane segment at 291–311 (HGLHLLGTASTWFLLDIAFYS) threads the bilayer. The Extracellular portion of the chain corresponds to 312-343 (QNLFQKDIFSAIGWIPPAETMNALEEVYRIAR). A helical membrane pass occupies residues 344 to 364 (AQTLIALCSTVPGYWFTVAFI). Residues 365-369 (DKIGR) are Cytoplasmic-facing. The chain crosses the membrane as a helical span at residues 370 to 390 (FAIQLMGFFFMTVFMFALAIP). The Extracellular portion of the chain corresponds to 391–400 (YTHWTHKDNR). Residues 401 to 421 (IGFVIMYSLTFFFANFGPNAT) form a helical membrane-spanning segment. Residues 422-440 (TFVVPAEIFPARLRSTCHG) are Cytoplasmic-facing. The chain crosses the membrane as a helical span at residues 441–461 (ISAAAGKAGAMVGAFGFLYAA). At 462 to 481 (QSTDPKKTDAGYPAGIGVRN) the chain is on the extracellular side. Residues 482-502 (SLIVLGCVNFLGMLFTLLVPE) form a helical membrane-spanning segment. Topologically, residues 503-534 (SKGKSLEEMSRENEGEDENGTEMRASGRTVPV) are cytoplasmic. The interval 507-534 (SLEEMSRENEGEDENGTEMRASGRTVPV) is disordered.

This sequence belongs to the major facilitator superfamily. Phosphate:H(+) symporter (TC 2.A.1.9) family.

The protein resides in the cell membrane. It carries out the reaction phosphate(in) + H(+)(in) = phosphate(out) + H(+)(out). Low-affinity transporter for external inorganic phosphate (Pi). Involved in phosphorus (P) remobilization from dying to developing tissues during corolla senescence in an ethylene-dependent manner. The sequence is that of Low affinity inorganic phosphate transporter 1 from Petunia hybrida (Petunia).